A 588-amino-acid chain; its full sequence is Mitochondrial tRNA methylthiotransferase CDK5RAP1 (588 aa).

The transit peptide at 1–30 directs the protein to the mitochondrion; sequence MHPLRCVLQVQRLSAPFTSMCWVLLRTCRA. 2 disordered regions span residues 33–53 and 70–91; these read SVSSTPCPSPEAKSSEAQKDF and ASVPQEKPSSPEVEDPPPYLSG. In terms of domain architecture, MTTase N-terminal spans 99–219; it reads RKVYLETYGC…LPRLLAVVES (121 aa). Residues Cys-108, Cys-144, Cys-182, Cys-257, Cys-261, and Cys-264 each coordinate [4Fe-4S] cluster. Residues 243-498 enclose the Radical SAM core domain; that stretch reads SPSATSAFVS…TVFREEASKA (256 aa). Residues 500–575 enclose the TRAM domain; the sequence is KTSVGCSQLV…SQTLKGHILC (76 aa).

This sequence belongs to the methylthiotransferase family. MiaB subfamily. In terms of assembly, interacts with CDK5R1 (p35 form). CDK5RAP1, CDK5RAP2 and CDK5RAP3 show competitive binding to CDK5R1. Probably forms a complex with CDK5R1 and CDK5. It depends on [4Fe-4S] cluster as a cofactor. As to expression, expressed in brain, liver, skeletal muscle and heart.

It is found in the mitochondrion. The catalysed reaction is N(6)-dimethylallyladenosine(37) in tRNA + (sulfur carrier)-SH + AH2 + 2 S-adenosyl-L-methionine = 2-methylsulfanyl-N(6)-dimethylallyladenosine(37) in tRNA + (sulfur carrier)-H + 5'-deoxyadenosine + L-methionine + A + S-adenosyl-L-homocysteine + 2 H(+). Functionally, methylthiotransferase that catalyzes the conversion of N6-(dimethylallyl)adenosine (i(6)A) to 2-methylthio-N6-(dimethylallyl)adenosine (ms(2)i(6)A) at position 37 (adjacent to the 3'-end of the anticodon) of four mitochondrial DNA-encoded tRNAs (Ser(UCN), Phe, Tyr and Trp). Essential for efficient and highly accurate protein translation by the ribosome. Specifically inhibits CDK5 activation by CDK5R1. Essential for efficient mitochondrial protein synthesis and respiratory chain. In Mus musculus (Mouse), this protein is Mitochondrial tRNA methylthiotransferase CDK5RAP1.